Here is a 134-residue protein sequence, read N- to C-terminus: D-ribose pyranase (134 aa).

Histidine 20 (proton donor) is an active-site residue. Substrate contacts are provided by residues aspartate 28, histidine 101, and tyrosine 123–asparagine 125.

It belongs to the RbsD / FucU family. RbsD subfamily. In terms of assembly, homodecamer.

Its subcellular location is the cytoplasm. It carries out the reaction beta-D-ribopyranose = beta-D-ribofuranose. The protein operates within carbohydrate metabolism; D-ribose degradation; D-ribose 5-phosphate from beta-D-ribopyranose: step 1/2. In terms of biological role, catalyzes the interconversion of beta-pyran and beta-furan forms of D-ribose. In Pseudomonas fluorescens (strain ATCC BAA-477 / NRRL B-23932 / Pf-5), this protein is D-ribose pyranase.